A 273-amino-acid polypeptide reads, in one-letter code: 4-hydroxy-tetrahydrodipicolinate reductase (273 aa).

NAD(+) is bound by residues 8 to 13, D35, 103 to 105, and 129 to 132; these read GALGRM, GTT, and SQNY. H161 functions as the Proton donor/acceptor in the catalytic mechanism. H162 provides a ligand contact to (S)-2,3,4,5-tetrahydrodipicolinate. K165 functions as the Proton donor in the catalytic mechanism. 171–172 provides a ligand contact to (S)-2,3,4,5-tetrahydrodipicolinate; that stretch reads GT.

The protein belongs to the DapB family.

It is found in the cytoplasm. The enzyme catalyses (S)-2,3,4,5-tetrahydrodipicolinate + NAD(+) + H2O = (2S,4S)-4-hydroxy-2,3,4,5-tetrahydrodipicolinate + NADH + H(+). It carries out the reaction (S)-2,3,4,5-tetrahydrodipicolinate + NADP(+) + H2O = (2S,4S)-4-hydroxy-2,3,4,5-tetrahydrodipicolinate + NADPH + H(+). It functions in the pathway amino-acid biosynthesis; L-lysine biosynthesis via DAP pathway; (S)-tetrahydrodipicolinate from L-aspartate: step 4/4. Functionally, catalyzes the conversion of 4-hydroxy-tetrahydrodipicolinate (HTPA) to tetrahydrodipicolinate. In Methanococcus aeolicus (strain ATCC BAA-1280 / DSM 17508 / OCM 812 / Nankai-3), this protein is 4-hydroxy-tetrahydrodipicolinate reductase.